Here is an 893-residue protein sequence, read N- to C-terminus: DNA mismatch repair protein MutS (893 aa).

ATP is bound at residue 637–644; that stretch reads GPNMGGKS.

The protein belongs to the DNA mismatch repair MutS family.

Its function is as follows. This protein is involved in the repair of mismatches in DNA. It is possible that it carries out the mismatch recognition step. This protein has a weak ATPase activity. The chain is DNA mismatch repair protein MutS from Burkholderia thailandensis (strain ATCC 700388 / DSM 13276 / CCUG 48851 / CIP 106301 / E264).